The primary structure comprises 462 residues: ATP synthase subunit beta (462 aa).

ATP is bound at residue 151-158 (GGAGVGKT).

The protein belongs to the ATPase alpha/beta chains family. As to quaternary structure, F-type ATPases have 2 components, CF(1) - the catalytic core - and CF(0) - the membrane proton channel. CF(1) has five subunits: alpha(3), beta(3), gamma(1), delta(1), epsilon(1). CF(0) has four main subunits: a(1), b(1), b'(1) and c(9-12).

The protein localises to the cell inner membrane. It carries out the reaction ATP + H2O + 4 H(+)(in) = ADP + phosphate + 5 H(+)(out). Its function is as follows. Produces ATP from ADP in the presence of a proton gradient across the membrane. The catalytic sites are hosted primarily by the beta subunits. In Pelodictyon phaeoclathratiforme (strain DSM 5477 / BU-1), this protein is ATP synthase subunit beta.